The primary structure comprises 242 residues: Prosalusin (242 aa).

An N-terminal signal peptide occupies residues 1–26 (MAAATRSCRPWGSLLGLIWLVSAAAA). The propeptide occupies 27–189 (SWDLSSLRCN…SSWVVYGTNY (163 aa)). An ATP-binding site is contributed by 93–100 (GWTGTGKS). N149 is a glycosylation site (N-linked (GlcNAc...) asparagine).

This sequence belongs to the ClpA/ClpB family. Torsin subfamily.

Its subcellular location is the secreted. Its function is as follows. Salusin may be a endocrine and/or paracrine factor able to increase intracellular calcium concentrations and induce cell mitogenesis. Salusin may also be a potent hypotensive peptide. In Bos taurus (Bovine), this protein is Prosalusin (TOR2A).